Here is a 348-residue protein sequence, read N- to C-terminus: Erythronate-4-phosphate dehydrogenase (348 aa).

Substrate contacts are provided by Thr46 and Thr67. Asp147 provides a ligand contact to NAD(+). Arg209 is an active-site residue. Asp233 is an NAD(+) binding site. Glu238 is a catalytic residue. The Proton donor role is filled by His255. Gly258 lines the NAD(+) pocket. Tyr259 serves as a coordination point for substrate.

This sequence belongs to the D-isomer specific 2-hydroxyacid dehydrogenase family. PdxB subfamily. Homodimer.

Its subcellular location is the cytoplasm. It carries out the reaction 4-phospho-D-erythronate + NAD(+) = (R)-3-hydroxy-2-oxo-4-phosphooxybutanoate + NADH + H(+). It participates in cofactor biosynthesis; pyridoxine 5'-phosphate biosynthesis; pyridoxine 5'-phosphate from D-erythrose 4-phosphate: step 2/5. Its function is as follows. Catalyzes the oxidation of erythronate-4-phosphate to 3-hydroxy-2-oxo-4-phosphonooxybutanoate. The polypeptide is Erythronate-4-phosphate dehydrogenase (Bacteroides fragilis (strain ATCC 25285 / DSM 2151 / CCUG 4856 / JCM 11019 / LMG 10263 / NCTC 9343 / Onslow / VPI 2553 / EN-2)).